The primary structure comprises 278 residues: Large ribosomal subunit protein uL2 (278 aa).

The interval Arg218–Lys278 is disordered.

This sequence belongs to the universal ribosomal protein uL2 family. As to quaternary structure, part of the 50S ribosomal subunit. Forms a bridge to the 30S subunit in the 70S ribosome.

One of the primary rRNA binding proteins. Required for association of the 30S and 50S subunits to form the 70S ribosome, for tRNA binding and peptide bond formation. It has been suggested to have peptidyltransferase activity; this is somewhat controversial. Makes several contacts with the 16S rRNA in the 70S ribosome. The chain is Large ribosomal subunit protein uL2 from Rhizobium etli (strain ATCC 51251 / DSM 11541 / JCM 21823 / NBRC 15573 / CFN 42).